A 252-amino-acid polypeptide reads, in one-letter code: tRNA (guanine-N(1)-)-methyltransferase (252 aa).

Residues glycine 116 and 135 to 140 (LGDYVL) each bind S-adenosyl-L-methionine.

This sequence belongs to the RNA methyltransferase TrmD family. Homodimer.

It localises to the cytoplasm. The enzyme catalyses guanosine(37) in tRNA + S-adenosyl-L-methionine = N(1)-methylguanosine(37) in tRNA + S-adenosyl-L-homocysteine + H(+). In terms of biological role, specifically methylates guanosine-37 in various tRNAs. The chain is tRNA (guanine-N(1)-)-methyltransferase from Limosilactobacillus reuteri (strain DSM 20016) (Lactobacillus reuteri).